The chain runs to 226 residues: Exosome complex component Rrp4 (226 aa).

The 75-residue stretch at 61-135 (NDLVIGKVNS…RDPLVSISDR (75 aa)) folds into the S1 motif domain. Residues 141–200 (DSGVLMEISPSKVPRLIGKKGSMIQMIEEATDAAVTIGQNGWVVVSCESPEGLLKAKKAI) form the KH domain.

The protein belongs to the RRP4 family. As to quaternary structure, component of the archaeal exosome complex. Forms a trimer of Rrp4 and/or Csl4 subunits. The trimer associates with a hexameric ring-like arrangement composed of 3 Rrp41-Rrp42 heterodimers.

Its subcellular location is the cytoplasm. Its function is as follows. Non-catalytic component of the exosome, which is a complex involved in RNA degradation. Increases the RNA binding and the efficiency of RNA degradation. Confers strong poly(A) specificity to the exosome. The sequence is that of Exosome complex component Rrp4 from Nitrosopumilus maritimus (strain SCM1).